We begin with the raw amino-acid sequence, 88 residues long: Small ribosomal subunit protein uS17 (88 aa).

Belongs to the universal ribosomal protein uS17 family. In terms of assembly, part of the 30S ribosomal subunit.

Its function is as follows. One of the primary rRNA binding proteins, it binds specifically to the 5'-end of 16S ribosomal RNA. In Mycoplasmopsis agalactiae (strain NCTC 10123 / CIP 59.7 / PG2) (Mycoplasma agalactiae), this protein is Small ribosomal subunit protein uS17.